Here is a 281-residue protein sequence, read N- to C-terminus: NADPH-dependent 7-cyano-7-deazaguanine reductase (281 aa).

88-90 lines the substrate pocket; sequence IES. 90–91 contacts NADPH; the sequence is SK. Cys-189 (thioimide intermediate) is an active-site residue. The active-site Proton donor is the Asp-196. Position 228–229 (228–229) interacts with substrate; that stretch reads HE. 257–258 serves as a coordination point for NADPH; it reads RG.

The protein belongs to the GTP cyclohydrolase I family. QueF type 2 subfamily. In terms of assembly, homodimer.

It is found in the cytoplasm. The catalysed reaction is 7-aminomethyl-7-carbaguanine + 2 NADP(+) = 7-cyano-7-deazaguanine + 2 NADPH + 3 H(+). It participates in tRNA modification; tRNA-queuosine biosynthesis. Functionally, catalyzes the NADPH-dependent reduction of 7-cyano-7-deazaguanine (preQ0) to 7-aminomethyl-7-deazaguanine (preQ1). The protein is NADPH-dependent 7-cyano-7-deazaguanine reductase of Sodalis glossinidius (strain morsitans).